The chain runs to 196 residues: Pyridoxine/pyridoxamine 5'-phosphate oxidase (196 aa).

Residues 44-49 (RTVLLK), 59-60 (YT), arginine 65, lysine 66, and glutamine 88 each bind FMN. Lysine 49 is a substrate binding site. Positions 106, 110, and 114 each coordinate substrate. Residues 123–124 (QS) and tryptophan 169 contribute to the FMN site. A substrate-binding site is contributed by 175-177 (RLH). Arginine 179 is an FMN binding site.

The protein belongs to the pyridoxamine 5'-phosphate oxidase family. As to quaternary structure, homodimer. It depends on FMN as a cofactor.

The enzyme catalyses pyridoxamine 5'-phosphate + O2 + H2O = pyridoxal 5'-phosphate + H2O2 + NH4(+). It catalyses the reaction pyridoxine 5'-phosphate + O2 = pyridoxal 5'-phosphate + H2O2. The protein operates within cofactor metabolism; pyridoxal 5'-phosphate salvage; pyridoxal 5'-phosphate from pyridoxamine 5'-phosphate: step 1/1. It functions in the pathway cofactor metabolism; pyridoxal 5'-phosphate salvage; pyridoxal 5'-phosphate from pyridoxine 5'-phosphate: step 1/1. Catalyzes the oxidation of either pyridoxine 5'-phosphate (PNP) or pyridoxamine 5'-phosphate (PMP) into pyridoxal 5'-phosphate (PLP). The chain is Pyridoxine/pyridoxamine 5'-phosphate oxidase from Alkalilimnicola ehrlichii (strain ATCC BAA-1101 / DSM 17681 / MLHE-1).